A 294-amino-acid chain; its full sequence is Small ribosomal subunit biogenesis GTPase RsgA (294 aa).

The 161-residue stretch at lysine 63 to leucine 223 folds into the CP-type G domain. Residues serine 112–aspartate 115 and glycine 166–serine 174 contribute to the GTP site. Zn(2+) is bound by residues cysteine 247, cysteine 252, histidine 254, and cysteine 260.

It belongs to the TRAFAC class YlqF/YawG GTPase family. RsgA subfamily. Monomer. Associates with 30S ribosomal subunit, binds 16S rRNA. Requires Zn(2+) as cofactor.

It is found in the cytoplasm. One of several proteins that assist in the late maturation steps of the functional core of the 30S ribosomal subunit. Helps release RbfA from mature subunits. May play a role in the assembly of ribosomal proteins into the subunit. Circularly permuted GTPase that catalyzes slow GTP hydrolysis, GTPase activity is stimulated by the 30S ribosomal subunit. The protein is Small ribosomal subunit biogenesis GTPase RsgA of Halalkalibacterium halodurans (strain ATCC BAA-125 / DSM 18197 / FERM 7344 / JCM 9153 / C-125) (Bacillus halodurans).